A 290-amino-acid chain; its full sequence is Glyceraldehyde-3-phosphate dehydrogenase (290 aa).

2 residues coordinate NAD(+): D13 and R58. D-glyceraldehyde 3-phosphate contacts are provided by residues 129-131, T160, 189-190, and R212; these read SCT and TG. C130 acts as the Nucleophile in catalysis.

Belongs to the glyceraldehyde-3-phosphate dehydrogenase family. Homotetramer.

The protein resides in the cytoplasm. The catalysed reaction is D-glyceraldehyde 3-phosphate + phosphate + NAD(+) = (2R)-3-phospho-glyceroyl phosphate + NADH + H(+). It functions in the pathway carbohydrate degradation; glycolysis; pyruvate from D-glyceraldehyde 3-phosphate: step 1/5. In Lactarius deterrimus (False saffron milkcap), this protein is Glyceraldehyde-3-phosphate dehydrogenase (GPD).